Here is a 140-residue protein sequence, read N- to C-terminus: uncharacterized protein (140 aa).

This is an uncharacterized protein from Saccharomyces cerevisiae (strain ATCC 204508 / S288c) (Baker's yeast).